We begin with the raw amino-acid sequence, 438 residues long: V-type ATP synthase beta chain (438 aa).

The protein belongs to the ATPase alpha/beta chains family.

Produces ATP from ADP in the presence of a proton gradient across the membrane. The V-type beta chain is a regulatory subunit. The chain is V-type ATP synthase beta chain (atpB) from Chlamydia muridarum (strain MoPn / Nigg).